The following is a 479-amino-acid chain: Aspartyl/glutamyl-tRNA(Asn/Gln) amidotransferase subunit B (479 aa).

Belongs to the GatB/GatE family. GatB subfamily. Heterotrimer of A, B and C subunits.

The enzyme catalyses L-glutamyl-tRNA(Gln) + L-glutamine + ATP + H2O = L-glutaminyl-tRNA(Gln) + L-glutamate + ADP + phosphate + H(+). The catalysed reaction is L-aspartyl-tRNA(Asn) + L-glutamine + ATP + H2O = L-asparaginyl-tRNA(Asn) + L-glutamate + ADP + phosphate + 2 H(+). Its function is as follows. Allows the formation of correctly charged Asn-tRNA(Asn) or Gln-tRNA(Gln) through the transamidation of misacylated Asp-tRNA(Asn) or Glu-tRNA(Gln) in organisms which lack either or both of asparaginyl-tRNA or glutaminyl-tRNA synthetases. The reaction takes place in the presence of glutamine and ATP through an activated phospho-Asp-tRNA(Asn) or phospho-Glu-tRNA(Gln). This Halorhodospira halophila (strain DSM 244 / SL1) (Ectothiorhodospira halophila (strain DSM 244 / SL1)) protein is Aspartyl/glutamyl-tRNA(Asn/Gln) amidotransferase subunit B.